The sequence spans 561 residues: Acylcarnitine hydrolase (561 aa).

An N-terminal signal peptide occupies residues 1–26; the sequence is MARKQPHSWLNAVLFGLLLILIHVWG. A disulfide bridge connects residues Cys97 and Cys125. The active-site Acyl-ester intermediate is the Ser230. Cys282 and Cys293 are oxidised to a cystine. Active-site charge relay system residues include Glu347 and His459.

This sequence belongs to the type-B carboxylesterase/lipase family. Expressed in liver, stomach and kidney.

It localises to the microsome. The protein localises to the endoplasmic reticulum. It carries out the reaction all-trans-retinyl hexadecanoate + H2O = all-trans-retinol + hexadecanoate + H(+). It catalyses the reaction an O-acyl-(R)-carnitine + H2O = (R)-carnitine + a fatty acid + H(+). Hydrolase with high activity towards palmitoylcarnitine. Is also active with p-nitrophenylacetate and alpha-naphthylacetate. May also hydrolyze retinyl esters. This is Acylcarnitine hydrolase from Rattus norvegicus (Rat).